We begin with the raw amino-acid sequence, 94 residues long: Co-chaperonin GroES (94 aa).

This sequence belongs to the GroES chaperonin family. Heptamer of 7 subunits arranged in a ring. Interacts with the chaperonin GroEL.

It localises to the cytoplasm. Functionally, together with the chaperonin GroEL, plays an essential role in assisting protein folding. The GroEL-GroES system forms a nano-cage that allows encapsulation of the non-native substrate proteins and provides a physical environment optimized to promote and accelerate protein folding. GroES binds to the apical surface of the GroEL ring, thereby capping the opening of the GroEL channel. The polypeptide is Co-chaperonin GroES (Staphylococcus epidermidis).